The following is a 180-amino-acid chain: Pyruvate synthase subunit PorC (180 aa).

Heterotetramer of one alpha, one beta, one delta and one gamma chain.

The enzyme catalyses 2 oxidized [2Fe-2S]-[ferredoxin] + pyruvate + CoA = 2 reduced [2Fe-2S]-[ferredoxin] + acetyl-CoA + CO2 + H(+). This chain is Pyruvate synthase subunit PorC (porC), found in Methanothermobacter thermautotrophicus (strain ATCC 29096 / DSM 1053 / JCM 10044 / NBRC 100330 / Delta H) (Methanobacterium thermoautotrophicum).